The chain runs to 451 residues: NADH-quinone oxidoreductase subunit D (451 aa).

This sequence belongs to the complex I 49 kDa subunit family. In terms of assembly, NDH-1 is composed of 14 different subunits. Subunits NuoB, C, D, E, F, and G constitute the peripheral sector of the complex.

It localises to the cell inner membrane. The catalysed reaction is a quinone + NADH + 5 H(+)(in) = a quinol + NAD(+) + 4 H(+)(out). Its function is as follows. NDH-1 shuttles electrons from NADH, via FMN and iron-sulfur (Fe-S) centers, to quinones in the respiratory chain. The immediate electron acceptor for the enzyme in this species is believed to be a menaquinone. Couples the redox reaction to proton translocation (for every two electrons transferred, four hydrogen ions are translocated across the cytoplasmic membrane), and thus conserves the redox energy in a proton gradient. The sequence is that of NADH-quinone oxidoreductase subunit D from Salinibacter ruber (strain DSM 13855 / M31).